The sequence spans 64 residues: MLCLPVFIILLLLASPAAPNPLQTRIQSNLIRAGPEDANIKTDKRVISGLLASILVPLIDAIIG.

The signal sequence occupies residues 1–19 (MLCLPVFIILLLLASPAAP). A propeptide spanning residues 20 to 43 (NPLQTRIQSNLIRAGPEDANIKTD) is cleaved from the precursor. The residue at position 63 (isoleucine 63) is an Isoleucine amide.

It belongs to the conotoxin T superfamily. As to expression, expressed by the venom duct.

It is found in the secreted. The protein is Conotoxin VnMLCL-033 of Conus ventricosus (Mediterranean cone).